A 49-amino-acid chain; its full sequence is Defensin-like protein 1 (49 aa).

4 cysteine pairs are disulfide-bonded: Cys3–Cys49, Cys14–Cys35, Cys20–Cys43, and Cys24–Cys45.

This sequence belongs to the DEFL family.

It is found in the secreted. Possesses antimicrobial activity sensitive to inorganic cations. Binds specifically to the fungal plasma membrane. Has no inhibitory effect on insect gut alpha-amylase. The polypeptide is Defensin-like protein 1 (Clitoria ternatea (Butterfly pea)).